We begin with the raw amino-acid sequence, 504 residues long: L-amino-acid oxidase (504 aa).

Residues 1 to 18 (MNVFFMFSLLFLATLGSC) form the signal peptide. A disulfide bridge connects residues cysteine 28 and cysteine 191. FAD-binding positions include 61-62 (MS), 81-82 (EA), arginine 89, and 105-108 (GPMR). Residue arginine 108 coordinates substrate. N-linked (GlcNAc...) asparagine glycosylation is present at asparagine 190. A substrate-binding site is contributed by histidine 241. Residue valine 279 coordinates FAD. Cysteine 349 and cysteine 430 are disulfide-bonded. An N-linked (GlcNAc...) asparagine glycan is attached at asparagine 379. Position 390 (tyrosine 390) interacts with substrate. FAD contacts are provided by residues glutamate 475 and 482–487 (GWIDST). Position 482–483 (482–483 (GW)) interacts with substrate.

It belongs to the flavin monoamine oxidase family. FIG1 subfamily. As to quaternary structure, homodimer; non-covalently linked. The cofactor is FAD. Expressed by the venom gland.

Its subcellular location is the secreted. The enzyme catalyses an L-alpha-amino acid + O2 + H2O = a 2-oxocarboxylate + H2O2 + NH4(+). It catalyses the reaction L-leucine + O2 + H2O = 4-methyl-2-oxopentanoate + H2O2 + NH4(+). It carries out the reaction L-phenylalanine + O2 + H2O = 3-phenylpyruvate + H2O2 + NH4(+). The catalysed reaction is L-tryptophan + O2 + H2O = indole-3-pyruvate + H2O2 + NH4(+). The enzyme catalyses L-methionine + O2 + H2O = 4-methylsulfanyl-2-oxobutanoate + H2O2 + NH4(+). It catalyses the reaction L-tyrosine + O2 + H2O = 3-(4-hydroxyphenyl)pyruvate + H2O2 + NH4(+). In terms of biological role, catalyzes an oxidative deamination of predominantly hydrophobic and aromatic L-amino acids, thus producing hydrogen peroxide that may contribute to the diverse toxic effects of this enzyme. Is highly active on L-Tyr followed by L-Phe, L-Met, L-Leu, L-Trp, and weakly active on L-Ile, L-Arg, L-Val, L-Lys, and L-Ala. Inhibits ADP- and collagen-induced platelet aggregation. This inhibition is inhibited by catalase, indicating the importance of generated H(2)O(2) for the inhibitory effect. This effect on platelets among snake L-amino-acid oxidases is however controversial, since some of them induce aggregation, whereas the other inhibit agonist-induced aggregation. In vivo, this enzyme induces a rapid, substantial and reversible increase in the paw volume of mice (edema). In addition, myofibrosis, and inflammatory cell infiltration on the paw tissue are also observed. This Daboia russelii (Russel's viper) protein is L-amino-acid oxidase.